The chain runs to 321 residues: Annexin B10 (321 aa).

Annexin repeat units lie at residues 15-86, 87-158, 171-243, and 247-319; these read FDAS…GLMM, PPVE…LIVT, GQAK…AIVE, and SPAA…ALLG.

The protein belongs to the annexin family.

The sequence is that of Annexin B10 (AnxB10) from Drosophila melanogaster (Fruit fly).